A 56-amino-acid polypeptide reads, in one-letter code: Mitoregulin (56 aa).

At 2–9 (ADVSERTL) the chain is on the mitochondrial matrix side. The chain crosses the membrane as a helical span at residues 10–27 (QLSVLVAFASGVLLGWQA). At 28–56 (NRLRRRYLDWRKRRLQDKLAATQKKLDLA) the chain is on the mitochondrial intermembrane side.

In terms of assembly, interacts with mitochondrial trifunctional enzyme, a heterotetrameric complex composed of 2 HADHA subunits and 2 HADHB subunits. Interacts with cytochrome b5 reductase CYB5R3; the interaction is required to maintain cellular lipid composition and leads to stimulation of mitochondrial respiratory complex I activity. Interacts with ATP synthase subunit ATP5F1B/ATP5B.

It localises to the mitochondrion inner membrane. Its function is as follows. Positively regulates mitochondrial complex assembly and/or stability. Increases mitochondrial membrane potential while decreasing mitochondrial reactive oxygen species. Increases mitochondrial respiration rate. Increased mitochondrial respiratory activity promotes myogenic differentiation which facilitates muscle growth and regeneration. Increases mitochondrial calcium retention capacity. Plays a role in maintenance of cellular lipid composition through its interaction with cytochrome b5 reductase CYB5R3 which is required for mitochondrial respiratory complex I activity. Interacts with the mitochondrial trifunctional enzyme complex (MTE) and enhances fatty acid beta-oxidation. Not required for MTE formation or stability. Modulates triglyceride clearance in adipocytes through its role in regulating fatty acid beta-oxidation and lipolysis. This is Mitoregulin from Homo sapiens (Human).